A 324-amino-acid chain; its full sequence is MSRDSPPAFDPYKHLNITINPNGSCTRHFVWPRVEPDPDPCPGKLAASKDVTINHETGVSVRIFRPTNLPSNDNAVARLPIIIHLHGSGWILYPANSAANDRCCSQMASELTVIVVSVHYRLPPEHRLPAQYDDALDALLWVKQQVVDSTNGEPWLKDYADFSRCYICGSSNGANIAFQLALRSLDHDLTPLQIDGCVFYQPLFGGKTRTKSELKNFADPVMPVPAVDAMWELSLPVGVDRDHRYCNPLGYLPQKEKVGRLGRCLVIGYGGDTSLDRQQDFVNLLVAAGVRVEARFDDAGFHSIELVDPRRAVALLNMIRDFIS.

An Involved in the stabilization of the negatively charged intermediate by the formation of the oxyanion hole motif is present at residues 86–88 (HGS). Residues serine 171, aspartate 272, and histidine 302 contribute to the active site.

Belongs to the 'GDXG' lipolytic enzyme family. In terms of tissue distribution, expressed in flowers.

The enzyme catalyses a carboxylic ester + H2O = an alcohol + a carboxylate + H(+). In terms of biological role, carboxylesterase acting on esters with varying acyl chain length. The sequence is that of Probable carboxylesterase 9 (CXE9) from Arabidopsis thaliana (Mouse-ear cress).